Consider the following 625-residue polypeptide: Branchpoint-bridging protein (625 aa).

Polar residues predominate over residues 1-16 (MSWRSNAQRTGMNAQP). 2 disordered regions span residues 1–154 (MSWR…AIGA) and 177–206 (LRSG…RTNT). Over residues 22–31 (RWGGAGGAGE) the composition is skewed to gly residues. 3 stretches are compositionally biased toward low complexity: residues 32–61 (GPSS…SQPY), 70–91 (SSSS…AVAA), and 110–130 (SYAA…GADA). Over residues 177 to 190 (LRSGDFVPPDRERS) the composition is skewed to basic and acidic residues. A KH domain is found at 253 to 330 (YLPIKEFPEI…ASVKKCIKLI (78 aa)). 2 consecutive CCHC-type zinc fingers follow at residues 368 to 385 (QLCK…ECPE) and 393 to 410 (IICH…DCTQ). Positions 466–533 (GPDGKKIPPW…HAYHQQQQAY (68 aa)) are disordered. Residues 488 to 503 (APRGGDAGRGGWGHRG) are compositionally biased toward gly residues. Positions 516-533 (QHQQQQHPHAYHQQQQAY) are enriched in low complexity.

This sequence belongs to the BBP/SF1 family.

It is found in the nucleus. Functionally, necessary for the splicing of pre-mRNA. Has a role in the recognition of the branch site (5'-UACUAAC-3'), the pyrimidine tract and the 3'-splice site at the 3'-end of introns. The protein is Branchpoint-bridging protein (BBP) of Mycosarcoma maydis (Corn smut fungus).